The primary structure comprises 183 residues: TATA box-binding protein-like 1 (183 aa).

It belongs to the TBP family. Binds TFIIA and TFIIB. In terms of tissue distribution, present in the brain, heart, liver and gizzard.

It is found in the cytoplasm. The protein localises to the nucleus. Its function is as follows. Part of a specialized transcription system that mediates the transcription of most ribosomal proteins through the 5'-TCT-3' motif which is a core promoter element at these genes. Seems to also mediate the transcription of NF1. Does not bind the TATA box. The sequence is that of TATA box-binding protein-like 1 (TBPL1) from Gallus gallus (Chicken).